The primary structure comprises 348 residues: Rhodopsin (348 aa).

Over 1–33 the chain is Extracellular; that stretch reads TEGPFFYIPMVNTSGVVRSPYEYPQYYLVNPAA. Asparagine 12 carries an N-linked (GlcNAc...) asparagine glycan. A helical transmembrane segment spans residues 34 to 58; the sequence is YAILGAYMFFLIIIGFPVNFMTLYV. At 59 to 70 the chain is on the cytoplasmic side; that stretch reads TLEHKKLRTPLN. Residues 71 to 93 form a helical membrane-spanning segment; it reads YILLNLAVADLFMVIGGFTTTMY. Topologically, residues 94–107 are extracellular; the sequence is SSMHGYFVLGRLGC. Cysteine 107 and cysteine 184 are oxidised to a cystine. A helical transmembrane segment spans residues 108–130; sequence NMEGFSATLGGMISLWSLAVLAI. Positions 131-133 match the 'Ionic lock' involved in activated form stabilization motif; sequence ERW. At 131-149 the chain is on the cytoplasmic side; that stretch reads ERWVVVCKPISNFRFGENH. The helical transmembrane segment at 150-170 threads the bilayer; that stretch reads AIMGVSLTWFMALACTVPPLV. Residues 171–199 lie on the Extracellular side of the membrane; the sequence is GWSRYIPEGMQCSCGIDYYTRAEGFNNES. Asparagine 197 carries N-linked (GlcNAc...) asparagine glycosylation. A helical membrane pass occupies residues 200-221; the sequence is FVLYMFFCHFLVPLVIIFFCYG. Topologically, residues 222 to 249 are cytoplasmic; that stretch reads RLLCAVKEAAAAQQESETTQRAEREVTR. The chain crosses the membrane as a helical span at residues 250–271; sequence MVIIMVIGFLVCWLPYASVAWF. Over 272 to 283 the chain is Extracellular; that stretch reads IFTHQGSEFGPL. The helical transmembrane segment at 284-305 threads the bilayer; it reads FMTIPAFFAKSSSIYNPMIYIC. Lysine 293 bears the N6-(retinylidene)lysine mark. Topologically, residues 306-348 are cytoplasmic; the sequence is MNKQFRNCMITTLFCGKNPFEGEEEGASSTKTEASSASSVSPA. Cysteine 320 is lipidated: S-palmitoyl cysteine. Residues 327-348 are disordered; that stretch reads GEEEGASSTKTEASSASSVSPA. Over residues 332-348 the composition is skewed to low complexity; that stretch reads ASSTKTEASSASSVSPA.

The protein belongs to the G-protein coupled receptor 1 family. Opsin subfamily. Phosphorylated on some or all of the serine and threonine residues present in the C-terminal region. Post-translationally, contains one covalently linked retinal chromophore.

It is found in the membrane. The protein resides in the cell projection. Its subcellular location is the cilium. The protein localises to the photoreceptor outer segment. Functionally, photoreceptor required for image-forming vision at low light intensity. While most salt water fish species use retinal as chromophore, most freshwater fish use 3-dehydroretinal, or a mixture of retinal and 3-dehydroretinal. Light-induced isomerization of 11-cis to all-trans retinal triggers a conformational change that activates signaling via G-proteins. Subsequent receptor phosphorylation mediates displacement of the bound G-protein alpha subunit by arrestin and terminates signaling. This is Rhodopsin (rho) from Sargocentron punctatissimum (Speckled squirrelfish).